Here is a 126-residue protein sequence, read N- to C-terminus: Fumarate reductase subunit C (126 aa).

The next 3 membrane-spanning stretches (helical) occupy residues 30–50 (IFVAWFVLYLVLVLRAVGAGG), 64–84 (VVVVLNVVALSFLLLHAVTWF), and 105–125 (VLAGHYAAWLVVSVIVAWMVL).

It belongs to the FrdC family. In terms of assembly, part of an enzyme complex containing four subunits: a flavoprotein (FrdA), an iron-sulfur protein (FrdB), and two hydrophobic anchor proteins (FrdC and FrdD).

It is found in the cell membrane. Anchors the catalytic components of the fumarate reductase complex to the cell membrane, binds quinones. The polypeptide is Fumarate reductase subunit C (Mycobacterium tuberculosis (strain CDC 1551 / Oshkosh)).